The sequence spans 452 residues: Membrane-bound lytic murein transglycosylase D (452 aa).

Residues 1-15 form the signal peptide; the sequence is MKAKAILLASVLLVG. Residue Cys16 is the site of N-palmitoyl cysteine attachment. Cys16 is lipidated: S-diacylglycerol cysteine. A slt-type domain region spans residues 113 to 198; sequence NMPMELVLLP…LLTVAAYNSG (86 aa). Residue Glu125 is part of the active site. 2 LysM domains span residues 341 to 384 and 400 to 448; these read RVYT…SLTI and ITYR…KNNN.

The protein belongs to the transglycosylase Slt family.

It localises to the cell membrane. The enzyme catalyses Exolytic cleavage of the (1-&gt;4)-beta-glycosidic linkage between N-acetylmuramic acid (MurNAc) and N-acetylglucosamine (GlcNAc) residues in peptidoglycan, from either the reducing or the non-reducing ends of the peptidoglycan chains, with concomitant formation of a 1,6-anhydrobond in the MurNAc residue.. Its function is as follows. Murein-degrading enzyme. May play a role in recycling of muropeptides during cell elongation and/or cell division. The chain is Membrane-bound lytic murein transglycosylase D (mltD) from Escherichia coli O6:H1 (strain CFT073 / ATCC 700928 / UPEC).